A 462-amino-acid polypeptide reads, in one-letter code: MSTGGPQKLEAQGGKEGKEWDDGAEHDGVTKIYVAAGGLGIEQIRFDYVKNGQPKEGSFHGVKGRSTISTIEISHPAEYLISMEGWYDSTNIIQGIQFKSNKHTSQYFGYEFFGDGTQFSLQVNDNKIIGFHGFADSHLNSVGAYFAPISSSLTTTPNKVEAQGGNGGETFDDGVFDHVRKVYVGQGESGVAYVKFEYEKDGKRETRDHGKMTLLGTEEFEVDSDDYITSIEVSVDKVFGYNSEIVTALVFKTSKGTTSPPFGMVTEKKFELKDGNGGKLAGFHGKASDVLYALGAYFAPSTTSTTPSTTKKLQARGGNGGASWDDGVFDGVRKILVGQGNDGVAFVTFEYNKGSQAILGDGHGKKTLLGTETFELDYPSEYITSVEGYYDKIFGVEAEVVTSLTFKTNKRTSQPFGMTAGEHFELKEDGYKVVGFHGKAGDLVHQIGVHIVPIFTNYRVAI.

Residues 1–23 (MSTGGPQKLEAQGGKEGKEWDDG) form a disordered region. Jacalin-type lectin domains lie at 6 to 148 (PQKL…YFAP), 157 to 300 (PNKV…YFAP), and 310 to 453 (TKKL…HIVP). The span at 13-23 (GGKEGKEWDDG) shows a compositional bias: basic and acidic residues.

This sequence belongs to the jacalin lectin family. As to expression, expressed exclusively in flowers, in male and female organs, petals and pedicels. Not detected in pollen grains or sepals.

In Arabidopsis thaliana (Mouse-ear cress), this protein is Myrosinase-binding protein 1 (MBP1).